A 278-amino-acid polypeptide reads, in one-letter code: 4-deoxy-L-threo-5-hexosulose-uronate ketol-isomerase (278 aa).

The Zn(2+) site is built by His196, His198, Glu203, and His245.

Belongs to the KduI family. In terms of assembly, homohexamer. Zn(2+) serves as cofactor.

It carries out the reaction 5-dehydro-4-deoxy-D-glucuronate = 3-deoxy-D-glycero-2,5-hexodiulosonate. The protein operates within glycan metabolism; pectin degradation; 2-dehydro-3-deoxy-D-gluconate from pectin: step 4/5. Functionally, catalyzes the isomerization of 5-dehydro-4-deoxy-D-glucuronate to 3-deoxy-D-glycero-2,5-hexodiulosonate. This is 4-deoxy-L-threo-5-hexosulose-uronate ketol-isomerase from Escherichia coli (strain UTI89 / UPEC).